The primary structure comprises 548 residues: Chaperonin GroEL (548 aa).

Residues 30 to 33, Lys51, 87 to 91, Gly415, 479 to 481, and Asp495 each bind ATP; these read TLGP, DGTTT, and NAA.

This sequence belongs to the chaperonin (HSP60) family. In terms of assembly, forms a cylinder of 14 subunits composed of two heptameric rings stacked back-to-back. Interacts with the co-chaperonin GroES.

It localises to the cytoplasm. The enzyme catalyses ATP + H2O + a folded polypeptide = ADP + phosphate + an unfolded polypeptide.. Functionally, together with its co-chaperonin GroES, plays an essential role in assisting protein folding. The GroEL-GroES system forms a nano-cage that allows encapsulation of the non-native substrate proteins and provides a physical environment optimized to promote and accelerate protein folding. The polypeptide is Chaperonin GroEL (Ectopseudomonas mendocina (strain ymp) (Pseudomonas mendocina)).